A 347-amino-acid chain; its full sequence is Methionine import ATP-binding protein MetN (347 aa).

Residues 2 to 247 (ITTTGLTKVY…PGSELASALF (246 aa)) enclose the ABC transporter domain. 38 to 45 (GQSGAGKS) contacts ATP.

It belongs to the ABC transporter superfamily. Methionine importer (TC 3.A.1.24) family. In terms of assembly, the complex is composed of two ATP-binding proteins (MetN), two transmembrane proteins (MetI) and a solute-binding protein (MetQ).

The protein localises to the cell membrane. It catalyses the reaction L-methionine(out) + ATP + H2O = L-methionine(in) + ADP + phosphate + H(+). The catalysed reaction is D-methionine(out) + ATP + H2O = D-methionine(in) + ADP + phosphate + H(+). Its function is as follows. Part of the ABC transporter complex MetNIQ involved in methionine import. Responsible for energy coupling to the transport system. In Streptomyces avermitilis (strain ATCC 31267 / DSM 46492 / JCM 5070 / NBRC 14893 / NCIMB 12804 / NRRL 8165 / MA-4680), this protein is Methionine import ATP-binding protein MetN.